A 322-amino-acid chain; its full sequence is Transaldolase (322 aa).

Lys-136 acts as the Schiff-base intermediate with substrate in catalysis.

This sequence belongs to the transaldolase family. Type 1 subfamily. Homodimer.

It is found in the cytoplasm. The enzyme catalyses D-sedoheptulose 7-phosphate + D-glyceraldehyde 3-phosphate = D-erythrose 4-phosphate + beta-D-fructose 6-phosphate. Its pathway is carbohydrate degradation; pentose phosphate pathway; D-glyceraldehyde 3-phosphate and beta-D-fructose 6-phosphate from D-ribose 5-phosphate and D-xylulose 5-phosphate (non-oxidative stage): step 2/3. Transaldolase is important for the balance of metabolites in the pentose-phosphate pathway. The sequence is that of Transaldolase from Xanthomonas oryzae pv. oryzae (strain MAFF 311018).